A 101-amino-acid chain; its full sequence is Protein Tat (101 aa).

An interaction with human CREBBP region spans residues 1–24 (MEPVDPSLDPWNHPGSQPTTPCTK). The segment at 1-48 (MEPVDPSLDPWNHPGSQPTTPCTKCYCKRCCFHCQWCFTTKGLGISYG) is transactivation. Cys22, Cys25, and Cys27 together coordinate Zn(2+). Positions 22 to 37 (CTKCYCKRCCFHCQWC) are cysteine-rich. Residue Lys28 is modified to N6-acetyllysine; by host PCAF. Positions 30, 33, 34, and 37 each coordinate Zn(2+). Residues 38–48 (FTTKGLGISYG) are core. The segment covering 48–58 (GRKKRRQRHRT) has biased composition (basic residues). Residues 48-101 (GRKKRRQRHRTPQSSQVHQNSLPKQPLSQARGDPTGPKESKKEVESKAKTDPCA) form a disordered region. The Nuclear localization signal, RNA-binding (TAR), and protein transduction signature appears at 49–57 (RKKRRQRHR). The tract at residues 49 to 86 (RKKRRQRHRTPQSSQVHQNSLPKQPLSQARGDPTGPKE) is interaction with the host capping enzyme RNGTT. 2 positions are modified to N6-acetyllysine; by host EP300 and GCN5L2: Lys50 and Lys51. Residues Arg52 and Arg53 each carry the asymmetric dimethylarginine; by host PRMT6 modification. The segment covering 59 to 75 (PQSSQVHQNSLPKQPLS) has biased composition (polar residues). Lys71 is covalently cross-linked (Glycyl lysine isopeptide (Lys-Gly) (interchain with G-Cter in ubiquitin)). The Cell attachment site motif lies at 78–80 (RGD). Over residues 83–101 (GPKESKKEVESKAKTDPCA) the composition is skewed to basic and acidic residues.

Belongs to the lentiviruses Tat family. As to quaternary structure, interacts with host CCNT1. Associates with the P-TEFb complex composed at least of Tat, P-TEFb (CDK9 and CCNT1), TAR RNA, RNA Pol II. Recruits the HATs CREBBP, TAF1/TFIID, EP300, PCAF and GCN5L2. Interacts with host KAT5/Tip60; this interaction targets the latter to degradation. Interacts with the host deacetylase SIRT1. Interacts with host capping enzyme RNGTT; this interaction stimulates RNGTT. Binds to host KDR, and to the host integrins ITGAV/ITGB3 and ITGA5/ITGB1. Interacts with host KPNB1/importin beta-1 without previous binding to KPNA1/importin alpha-1. Interacts with EIF2AK2. Interacts with host nucleosome assembly protein NAP1L1; this interaction may be required for the transport of Tat within the nucleus, since the two proteins interact at the nuclear rim. Interacts with host C1QBP/SF2P32; this interaction involves lysine-acetylated Tat. Interacts with the host chemokine receptors CCR2, CCR3 and CXCR4. Interacts with host DPP4/CD26; this interaction may trigger an anti-proliferative effect. Interacts with host LDLR. Interacts with the host extracellular matrix metalloproteinase MMP1. Interacts with host PRMT6; this interaction mediates Tat's methylation. Interacts with, and is ubiquitinated by MDM2/Hdm2. Interacts with host PSMC3 and HTATIP2. Interacts with STAB1; this interaction may overcome SATB1-mediated repression of IL2 and IL2RA (interleukin) in T cells by binding to the same domain than HDAC1. Interacts (when acetylated) with human CDK13, thereby increasing HIV-1 mRNA splicing and promoting the production of the doubly spliced HIV-1 protein Nef. Interacts with host TBP; this interaction modulates the activity of transcriptional pre-initiation complex. Interacts with host RELA. Interacts with host PLSCR1; this interaction negatively regulates Tat transactivation activity by altering its subcellular distribution. Asymmetrical arginine methylation by host PRMT6 seems to diminish the transactivation capacity of Tat and affects the interaction with host CCNT1. Post-translationally, acetylation by EP300, CREBBP, GCN5L2/GCN5 and PCAF regulates the transactivation activity of Tat. EP300-mediated acetylation of Lys-50 promotes dissociation of Tat from the TAR RNA through the competitive binding to PCAF's bromodomain. In addition, the non-acetylated Tat's N-terminus can also interact with PCAF. PCAF-mediated acetylation of Lys-28 enhances Tat's binding to CCNT1. Lys-50 is deacetylated by SIRT1. In terms of processing, polyubiquitination by host MDM2 does not target Tat to degradation, but activates its transactivation function and fosters interaction with CCNT1 and TAR RNA. Phosphorylated by EIF2AK2 on serine and threonine residues adjacent to the basic region important for TAR RNA binding and function. Phosphorylation of Tat by EIF2AK2 is dependent on the prior activation of EIF2AK2 by dsRNA.

It is found in the host nucleus. Its subcellular location is the host nucleolus. It localises to the host cytoplasm. The protein localises to the secreted. Functionally, transcriptional activator that increases RNA Pol II processivity, thereby increasing the level of full-length viral transcripts. Recognizes a hairpin structure at the 5'-LTR of the nascent viral mRNAs referred to as the transactivation responsive RNA element (TAR) and recruits the cyclin T1-CDK9 complex (P-TEFb complex) that will in turn hyperphosphorylate the RNA polymerase II to allow efficient elongation. The CDK9 component of P-TEFb and other Tat-activated kinases hyperphosphorylate the C-terminus of RNA Pol II that becomes stabilized and much more processive. Other factors such as HTATSF1/Tat-SF1, SUPT5H/SPT5, and HTATIP2 are also important for Tat's function. Besides its effect on RNA Pol II processivity, Tat induces chromatin remodeling of proviral genes by recruiting the histone acetyltransferases (HATs) CREBBP, EP300 and PCAF to the chromatin. This also contributes to the increase in proviral transcription rate, especially when the provirus integrates in transcriptionally silent region of the host genome. To ensure maximal activation of the LTR, Tat mediates nuclear translocation of NF-kappa-B by interacting with host RELA. Through its interaction with host TBP, Tat may also modulate transcription initiation. Tat can reactivate a latently infected cell by penetrating in it and transactivating its LTR promoter. In the cytoplasm, Tat is thought to act as a translational activator of HIV-1 mRNAs. Its function is as follows. Extracellular circulating Tat can be endocytosed by surrounding uninfected cells via the binding to several surface receptors such as CD26, CXCR4, heparan sulfate proteoglycans (HSPG) or LDLR. Neurons are rarely infected, but they internalize Tat via their LDLR. Through its interaction with nuclear HATs, Tat is potentially able to control the acetylation-dependent cellular gene expression. Modulates the expression of many cellular genes involved in cell survival, proliferation or in coding for cytokines or cytokine receptors. Tat plays a role in T-cell and neurons apoptosis. Tat induced neurotoxicity and apoptosis probably contribute to neuroAIDS. Circulating Tat also acts as a chemokine-like and/or growth factor-like molecule that binds to specific receptors on the surface of the cells, affecting many cellular pathways. In the vascular system, Tat binds to ITGAV/ITGB3 and ITGA5/ITGB1 integrins dimers at the surface of endothelial cells and competes with bFGF for heparin-binding sites, leading to an excess of soluble bFGF. The protein is Protein Tat of Human immunodeficiency virus type 1 group M subtype F1 (isolate VI850) (HIV-1).